A 356-amino-acid chain; its full sequence is Phosphoribosylformylglycinamidine cyclo-ligase (356 aa).

It belongs to the AIR synthase family.

The protein localises to the cytoplasm. It catalyses the reaction 2-formamido-N(1)-(5-O-phospho-beta-D-ribosyl)acetamidine + ATP = 5-amino-1-(5-phospho-beta-D-ribosyl)imidazole + ADP + phosphate + H(+). It participates in purine metabolism; IMP biosynthesis via de novo pathway; 5-amino-1-(5-phospho-D-ribosyl)imidazole from N(2)-formyl-N(1)-(5-phospho-D-ribosyl)glycinamide: step 2/2. The polypeptide is Phosphoribosylformylglycinamidine cyclo-ligase (Acinetobacter baumannii (strain AB307-0294)).